The following is a 312-amino-acid chain: Aminoacyl tRNA synthase complex-interacting multifunctional protein 1 (312 aa).

M1 carries the N-acetylmethionine modification. Residue A2 is modified to N-acetylalanine. Positions 6 to 46 are required for fibroblast proliferation; it reads AVLKRLEQKGAEADQIIEYLKQQVSLLKEKAILQATLREEK. Residues 54-194 form an interaction with HSP90B1 region; the sequence is KLKKEIEELK…APRTVVSGLV (141 aa). The tract at residues 101–114 is required for endothelial cell death; that stretch reads AVTTVSSGTKEQIK. The disordered stretch occupies residues 107 to 147; the sequence is SGTKEQIKGGTGDEKKAKEKIEKKGEKKEKKQQSIAGSADS. Over residues 111 to 138 the composition is skewed to basic and acidic residues; sequence EQIKGGTGDEKKAKEKIEKKGEKKEKKQ. The required for endothelial cell migration stretch occupies residues 114–192; sequence KGGTGDEKKA…EIAPRTVVSG (79 aa). Residue K137 forms a Glycyl lysine isopeptide (Lys-Gly) (interchain with G-Cter in SUMO1) linkage. Residue S140 is modified to Phosphoserine. A tRNA-binding domain is found at 151–252; the sequence is DVSRLDLRIG…NGSVPGDRIT (102 aa). N6-succinyllysine is present on K269.

As to quaternary structure, homodimer. Part of the multisynthetase complex (MSC), a multisubunit complex that groups tRNA ligases for Arg (RARS1), Asp (DARS1), Gln (QARS1), Ile (IARS1), Leu (LARS1), Lys (KARS1), Met (MARS1) the bifunctional ligase for Glu and Pro (EPRS1) and the auxiliary subunits AIMP1/p43, AIMP2/p38 and EEF1E1/p18. Interacts (via N-terminus) with RARS1 (via N-terminus). Part of a complex composed of RARS1, QARS1 and AIMP1. Interacts (via C-terminus) with SMURF2. Interacts (via N-terminus) with HSP90B1/gp96 (via C-terminus). Interacts with PSMA7. Interacts with TARS3. Post-translationally, cleaved by caspase-7 in response to apoptosis to produce EMAP-II.

Its subcellular location is the nucleus. The protein resides in the cytoplasm. It localises to the cytosol. It is found in the secreted. The protein localises to the endoplasmic reticulum. Its subcellular location is the golgi apparatus. Its function is as follows. Non-catalytic component of the multisynthase complex. Stimulates the catalytic activity of cytoplasmic arginyl-tRNA synthase. Binds tRNA. Possesses inflammatory cytokine activity. Negatively regulates TGF-beta signaling through stabilization of SMURF2 by binding to SMURF2 and inhibiting its SMAD7-mediated degradation. Involved in glucose homeostasis through induction of glucagon secretion at low glucose levels. Promotes dermal fibroblast proliferation and wound repair. Regulates KDELR1-mediated retention of HSP90B1/gp96 in the endoplasmic reticulum. Plays a role in angiogenesis by inducing endothelial cell migration at low concentrations and endothelian cell apoptosis at high concentrations. Induces maturation of dendritic cells and monocyte cell adhesion. Modulates endothelial cell responses by degrading HIF-1A through interaction with PSMA7. This Homo sapiens (Human) protein is Aminoacyl tRNA synthase complex-interacting multifunctional protein 1 (AIMP1).